Consider the following 57-residue polypeptide: Potassium channel toxin alpha-KTx 26.1 (57 aa).

The signal sequence occupies residues 1 to 22; the sequence is MSRLFVFILIALFLSAIIDVMS. Intrachain disulfides connect cysteine 30/cysteine 48, cysteine 34/cysteine 53, and cysteine 38/cysteine 55.

Belongs to the short scorpion toxin superfamily. Potassium channel inhibitor family. Alpha-KTx 26 subfamily. In terms of tissue distribution, expressed by the venom gland.

The protein localises to the secreted. Its function is as follows. Recombinant toxin that reversibly inhibits the potassium current of mKv1.3/KCNA3 channel stably expressed in COS7 cells (IC(50)=150 nM). Also shows a weak inhibition on Kv1.2/KCNA2, Kv1.3/KCNA3 and TRPV1 channels. The polypeptide is Potassium channel toxin alpha-KTx 26.1 (Olivierus martensii (Manchurian scorpion)).